The chain runs to 508 residues: Protein O-glucosyltransferase 3 (508 aa).

The first 24 residues, 1 to 24 (MLGVRRALLLPPLQLALLVAAGTG), serve as a signal peptide directing secretion. The stretch at 25 to 134 (ARVSAPRSLA…VAQSPYILKG (110 aa)) is one Filamin repeat. N307 carries N-linked (GlcNAc...) asparagine glycosylation. The disordered stretch occupies residues 480-508 (RDGMERVPQPDDSTSVRQCHRKRPEREEL). The short motif at 505-508 (REEL) is the Prevents secretion from ER element.

It belongs to the KDELC family.

Its subcellular location is the endoplasmic reticulum lumen. The catalysed reaction is L-seryl-[EGF-like domain protein] + UDP-alpha-D-glucose = 3-O-(beta-D-glucosyl)-L-seryl-[EGF-like domain protein] + UDP + H(+). It catalyses the reaction L-seryl-[EGF-like domain protein] + UDP-alpha-D-xylose = 3-O-(beta-D-xylosyl)-L-seryl-[EGF-like domain protein] + UDP + H(+). It functions in the pathway protein modification; protein glycosylation. In terms of biological role, protein glucosyltransferase that catalyzes the transfer of glucose from UDP-glucose to a serine residue within the consensus sequence peptide C-X-N-T-X-G-S-F-X-C. Can also catalyze the transfer of xylose from UDP-xylose but less efficiently. Specifically targets extracellular EGF repeats of proteins such as NOTCH1, NOTCH3, FBN1, FBN2 and LTBP1. May regulate the transport of NOTCH1 and NOTCH3 to the plasma membrane and thereby the Notch signaling pathway. In Rattus norvegicus (Rat), this protein is Protein O-glucosyltransferase 3 (Poglut3).